A 193-amino-acid chain; its full sequence is Pyridoxal 5'-phosphate synthase subunit PdxT (193 aa).

48–50 (GES) contributes to the L-glutamine binding site. Catalysis depends on Cys-80, which acts as the Nucleophile. Residues Arg-109 and 137 to 138 (IR) each bind L-glutamine. Residues His-173 and Glu-175 each act as charge relay system in the active site.

Belongs to the glutaminase PdxT/SNO family. As to quaternary structure, in the presence of PdxS, forms a dodecamer of heterodimers. Only shows activity in the heterodimer.

The catalysed reaction is aldehydo-D-ribose 5-phosphate + D-glyceraldehyde 3-phosphate + L-glutamine = pyridoxal 5'-phosphate + L-glutamate + phosphate + 3 H2O + H(+). The enzyme catalyses L-glutamine + H2O = L-glutamate + NH4(+). The protein operates within cofactor biosynthesis; pyridoxal 5'-phosphate biosynthesis. In terms of biological role, catalyzes the hydrolysis of glutamine to glutamate and ammonia as part of the biosynthesis of pyridoxal 5'-phosphate. The resulting ammonia molecule is channeled to the active site of PdxS. The chain is Pyridoxal 5'-phosphate synthase subunit PdxT from Mycobacteroides abscessus (strain ATCC 19977 / DSM 44196 / CCUG 20993 / CIP 104536 / JCM 13569 / NCTC 13031 / TMC 1543 / L948) (Mycobacterium abscessus).